Reading from the N-terminus, the 375-residue chain is 23S rRNA (uracil(747)-C(5))-methyltransferase RlmC (375 aa).

[4Fe-4S] cluster contacts are provided by Cys-3, Cys-11, Cys-14, and Cys-87. S-adenosyl-L-methionine is bound by residues Gln-212, Phe-241, Glu-262, and Asn-307. The active-site Nucleophile is Cys-334.

The protein belongs to the class I-like SAM-binding methyltransferase superfamily. RNA M5U methyltransferase family. RlmC subfamily.

The catalysed reaction is uridine(747) in 23S rRNA + S-adenosyl-L-methionine = 5-methyluridine(747) in 23S rRNA + S-adenosyl-L-homocysteine + H(+). In terms of biological role, catalyzes the formation of 5-methyl-uridine at position 747 (m5U747) in 23S rRNA. In Salmonella dublin (strain CT_02021853), this protein is 23S rRNA (uracil(747)-C(5))-methyltransferase RlmC.